The sequence spans 573 residues: N(2)-(2-carboxyethyl)arginine synthase (573 aa).

Positions 271 and 301 each coordinate substrate. 410 to 413 (IGFF) lines the thiamine diphosphate pocket. Position 414-415 (414-415 (RH)) interacts with substrate. Residue 436 to 438 (SSF) coordinates thiamine diphosphate. Asp-463 serves as a coordination point for Mg(2+). Residues 464-465 (GG), 490-495 (NDTNGL), and Tyr-561 each bind thiamine diphosphate. Mg(2+) contacts are provided by Asn-490 and Thr-492. Leu-571 contributes to the substrate binding site.

As to quaternary structure, homotetramer; dimer of dimers. Requires Mg(2+) as cofactor. Thiamine diphosphate serves as cofactor.

It catalyses the reaction D-glyceraldehyde 3-phosphate + L-arginine = N(2)-(2-carboxyethyl)-L-arginine + phosphate + H(+). Involved in the biosynthesis of the beta-lactamase inhibitor, clavulanic acid. Catalyzes the thiamine diphosphate (ThDP) dependent condensation of D-glyceraldehyde-3-phosphate (D-G3P) with L-arginine to yield the beta-amino acid, N2-(2-carboxyethyl)arginine (CEA) via a beta-elimination resulting in the formation of an enol which undergoes a second elimination to generate the alpha,beta-unsaturated acryloyl-ThDP. In Streptomyces clavuligerus, this protein is N(2)-(2-carboxyethyl)arginine synthase.